The primary structure comprises 107 residues: Heme-degrading monooxygenase (107 aa).

One can recognise an ABM domain in the interval 2–94 (IIVTNTAKIT…YILDNKITYY (93 aa)). Asparagine 6 is a Fe cation binding site. Heme is bound at residue histidine 76.

This sequence belongs to the antibiotic biosynthesis monooxygenase family. Heme-degrading monooxygenase IsdG subfamily. In terms of assembly, homodimer.

The protein localises to the cytoplasm. It catalyses the reaction heme b + 3 reduced [NADPH--hemoprotein reductase] + 3 O2 = biliverdin IXalpha + CO + Fe(2+) + 3 oxidized [NADPH--hemoprotein reductase] + 3 H2O + H(+). Allows bacterial pathogens to use the host heme as an iron source. Catalyzes the oxidative degradation of the heme macrocyclic porphyrin ring to the biliverdin in the presence of a suitable electron donor such as ascorbate or NADPH--cytochrome P450 reductase, with subsequent release of free iron. This chain is Heme-degrading monooxygenase, found in Bacillus thuringiensis subsp. konkukian (strain 97-27).